We begin with the raw amino-acid sequence, 126 residues long: MSNNNYIVPGEYRVAEGEIEINAGREKTTIRVSNTGDRPIQVGSHIHFVEVNKELLFDRAEGIGRRLNIPSGTAARFEPGEEMEVELTELGGNREVFGISDLTNGSVDNKELILQRAKELGYKGVE.

The protein belongs to the urease beta subunit family. Heterotrimer of UreA (gamma), UreB (beta) and UreC (alpha) subunits. Three heterotrimers associate to form the active enzyme.

It is found in the cytoplasm. The enzyme catalyses urea + 2 H2O + H(+) = hydrogencarbonate + 2 NH4(+). It functions in the pathway nitrogen metabolism; urea degradation; CO(2) and NH(3) from urea (urease route): step 1/1. The sequence is that of Urease subunit beta from Sporosarcina pasteurii (Bacillus pasteurii).